Here is a 416-residue protein sequence, read N- to C-terminus: Adenylosuccinate synthetase (416 aa).

GTP contacts are provided by residues 13-19 (GDEGKGK) and 41-43 (GHT). Asp14 functions as the Proton acceptor in the catalytic mechanism. Mg(2+) is bound by residues Asp14 and Gly41. IMP-binding positions include 14–17 (DEGK), 39–42 (NAGH), Thr126, Arg140, Gln220, Thr235, and Arg299. His42 functions as the Proton donor in the catalytic mechanism. A substrate-binding site is contributed by 295-301 (VSTGRKR). GTP is bound by residues Arg301, 327 to 329 (KLD), and 405 to 407 (STS).

The protein belongs to the adenylosuccinate synthetase family. As to quaternary structure, homodimer. Mg(2+) is required as a cofactor.

It localises to the cytoplasm. It catalyses the reaction IMP + L-aspartate + GTP = N(6)-(1,2-dicarboxyethyl)-AMP + GDP + phosphate + 2 H(+). Its pathway is purine metabolism; AMP biosynthesis via de novo pathway; AMP from IMP: step 1/2. Its function is as follows. Plays an important role in the de novo pathway of purine nucleotide biosynthesis. Catalyzes the first committed step in the biosynthesis of AMP from IMP. In Campylobacter jejuni subsp. jejuni serotype O:6 (strain 81116 / NCTC 11828), this protein is Adenylosuccinate synthetase.